The chain runs to 334 residues: MKEIIAKLADFKDLSSAEMTDVIERIVTGRVTESQIVAFLLGLKMKGETIEERTALAQVMRGHAKQIPTTIRTAMDNCGTGGDKSFSFNISTTAAFVLAGGGIKMAKHGNRSISSKSGSADVLEALGINLDLDAASLGKVFEQTGIVFLFAKNMHPAMKYIMPARLSLGIPTIMNLTGPLIHPMSLETQLLGTSRPDMLESTAEVLKNMGRKRAVVVSGPDGLDEAGLHGRTQYALLADGQISLHSFLPSDIGMEEISLEVIRGGNAKENAEILLSVLQNQASPYLETTVLNAGLGFYANGKSDSIEEGIALARQVIASGVAYEKLKQLQEYQK.

Residues Gly79, 82-83, Ser87, 89-92, 107-115, and Ser119 each bind 5-phospho-alpha-D-ribose 1-diphosphate; these read GD, NIST, and KHGNRSISS. Residue Gly79 coordinates anthranilate. Residue Ser91 participates in Mg(2+) binding. Asn110 is an anthranilate binding site. Arg165 contacts anthranilate. Residues Asp224 and Glu225 each contribute to the Mg(2+) site.

This sequence belongs to the anthranilate phosphoribosyltransferase family. As to quaternary structure, homodimer. Mg(2+) is required as a cofactor.

The enzyme catalyses N-(5-phospho-beta-D-ribosyl)anthranilate + diphosphate = 5-phospho-alpha-D-ribose 1-diphosphate + anthranilate. It functions in the pathway amino-acid biosynthesis; L-tryptophan biosynthesis; L-tryptophan from chorismate: step 2/5. In terms of biological role, catalyzes the transfer of the phosphoribosyl group of 5-phosphorylribose-1-pyrophosphate (PRPP) to anthranilate to yield N-(5'-phosphoribosyl)-anthranilate (PRA). This chain is Anthranilate phosphoribosyltransferase, found in Streptococcus sanguinis (strain SK36).